Consider the following 465-residue polypeptide: ATP-dependent rRNA helicase rrp3 (465 aa).

The tract at residues 1–46 (MSALKKRKITEKQPETNSDSEAESVSSRGSAKDETQTSGEEPAPAK) is disordered. The span at 15 to 29 (ETNSDSEAESVSSRG) shows a compositional bias: polar residues. A Q motif motif is present at residues 46-74 (KSFKELGIIDQLCEACENMGYKAPTPIQS). In terms of domain architecture, Helicase ATP-binding spans 77-248 (IPLALEGRDV…RASLSNPVRV (172 aa)). 90–97 (AETGSGKT) contacts ATP. A DEAD box motif is present at residues 196-199 (DEAD). A Helicase C-terminal domain is found at 275–419 (YLVYLLNEFA…EYQVEKDEVM (145 aa)). Positions 436–465 (MKSFDEKKGARGKKFGKGKRSRDDMDQEEG) are disordered. Over residues 445-455 (ARGKKFGKGKR) the composition is skewed to basic residues.

This sequence belongs to the DEAD box helicase family. DDX47/RRP3 subfamily. In terms of assembly, interacts with the SSU processome.

It localises to the nucleus. The enzyme catalyses ATP + H2O = ADP + phosphate + H(+). Its function is as follows. ATP-dependent rRNA helicase required for pre-ribosomal RNA processing. Involved in the maturation of the 35S-pre-rRNA and to its cleavage to mature 18S rRNA. This Emericella nidulans (strain FGSC A4 / ATCC 38163 / CBS 112.46 / NRRL 194 / M139) (Aspergillus nidulans) protein is ATP-dependent rRNA helicase rrp3.